A 132-amino-acid chain; its full sequence is ATP synthase epsilon chain (132 aa).

It belongs to the ATPase epsilon chain family. In terms of assembly, F-type ATPases have 2 components, CF(1) - the catalytic core - and CF(0) - the membrane proton channel. CF(1) has five subunits: alpha(3), beta(3), gamma(1), delta(1), epsilon(1). CF(0) has three main subunits: a, b and c.

Its subcellular location is the cell inner membrane. Produces ATP from ADP in the presence of a proton gradient across the membrane. The sequence is that of ATP synthase epsilon chain from Anaeromyxobacter sp. (strain K).